Consider the following 190-residue polypeptide: Segregation and condensation protein B (190 aa).

Belongs to the ScpB family. In terms of assembly, homodimer. Homodimerization may be required to stabilize the binding of ScpA to the Smc head domains. Component of a cohesin-like complex composed of ScpA, ScpB and the Smc homodimer, in which ScpA and ScpB bind to the head domain of Smc. The presence of the three proteins is required for the association of the complex with DNA.

It is found in the cytoplasm. In terms of biological role, participates in chromosomal partition during cell division. May act via the formation of a condensin-like complex containing Smc and ScpA that pull DNA away from mid-cell into both cell halves. The chain is Segregation and condensation protein B from Alkaliphilus metalliredigens (strain QYMF).